Reading from the N-terminus, the 96-residue chain is Co-chaperonin GroES (96 aa).

It belongs to the GroES chaperonin family. Heptamer of 7 subunits arranged in a ring. Interacts with the chaperonin GroEL.

The protein resides in the cytoplasm. Functionally, together with the chaperonin GroEL, plays an essential role in assisting protein folding. The GroEL-GroES system forms a nano-cage that allows encapsulation of the non-native substrate proteins and provides a physical environment optimized to promote and accelerate protein folding. GroES binds to the apical surface of the GroEL ring, thereby capping the opening of the GroEL channel. The protein is Co-chaperonin GroES of Vibrio campbellii (strain ATCC BAA-1116).